The primary structure comprises 196 residues: UMP-CMP kinase (196 aa).

13–18 (GAGKGT) provides a ligand contact to ATP. The segment at 33–63 (SAGDLLRDERKRPGSQYGELIENYIKEGEIV) is NMP. A ribonucleoside 5'-phosphate contacts are provided by residues Arg39, 61–63 (EIV), and 93–96 (GFPR). Asn100 serves as a coordination point for CMP. The interval 133–143 (ERGKSSGRSDD) is LID. Position 134 (Arg134) interacts with ATP. Positions 140 and 151 each coordinate a ribonucleoside 5'-phosphate. ATP is bound at residue Lys179.

Belongs to the adenylate kinase family. UMP-CMP kinase subfamily. As to quaternary structure, monomer. Mg(2+) serves as cofactor.

It is found in the nucleus. It localises to the cytoplasm. The enzyme catalyses CMP + ATP = CDP + ADP. The catalysed reaction is dCMP + ATP = dCDP + ADP. It carries out the reaction UMP + ATP = UDP + ADP. It catalyses the reaction a 2'-deoxyribonucleoside 5'-diphosphate + ATP = a 2'-deoxyribonucleoside 5'-triphosphate + ADP. The enzyme catalyses a ribonucleoside 5'-diphosphate + ATP = a ribonucleoside 5'-triphosphate + ADP. Its function is as follows. Catalyzes the phosphorylation of pyrimidine nucleoside monophosphates at the expense of ATP. Plays an important role in de novo pyrimidine nucleotide biosynthesis. Has preference for UMP and CMP as phosphate acceptors. Also displays broad nucleoside diphosphate kinase activity. This Gallus gallus (Chicken) protein is UMP-CMP kinase (CMPK).